The sequence spans 65 residues: Large ribosomal subunit protein bL33 (65 aa).

The tract at residues 19–40 is disordered; sequence TVPSSKKRSAGVSRYTTEKNRR.

The protein belongs to the bacterial ribosomal protein bL33 family.

In Prochlorococcus marinus (strain NATL2A), this protein is Large ribosomal subunit protein bL33.